The following is a 690-amino-acid chain: Elongation factor G (690 aa).

The 276-residue stretch at 8-283 (EDYRNFGIMA…AVVAYLPSPL (276 aa)) folds into the tr-type G domain. GTP contacts are provided by residues 17-24 (AHIDAGKT), 81-85 (DTPGH), and 135-138 (NKMD).

It belongs to the TRAFAC class translation factor GTPase superfamily. Classic translation factor GTPase family. EF-G/EF-2 subfamily.

It is found in the cytoplasm. Its function is as follows. Catalyzes the GTP-dependent ribosomal translocation step during translation elongation. During this step, the ribosome changes from the pre-translocational (PRE) to the post-translocational (POST) state as the newly formed A-site-bound peptidyl-tRNA and P-site-bound deacylated tRNA move to the P and E sites, respectively. Catalyzes the coordinated movement of the two tRNA molecules, the mRNA and conformational changes in the ribosome. The sequence is that of Elongation factor G from Nitrobacter winogradskyi (strain ATCC 25391 / DSM 10237 / CIP 104748 / NCIMB 11846 / Nb-255).